A 609-amino-acid polypeptide reads, in one-letter code: Cell division protein DipM (609 aa).

The signal sequence occupies residues 1–24 (MRQLWTQAAVIALTAGTLGAPAHA). A disordered region spans residues 21–103 (PAHASGQSGQ…PVLRATPPRT (83 aa)). A compositionally biased stretch (polar residues) spans 25–38 (SGQSGQRFTPNFPI). Residues 79–93 (LPPPAPVSTPAPAPQ) show a composition bias toward pro residues. LysM domains lie at 121–165 (QVRV…KIKG) and 171–215 (KAYV…KLLL). 2 stretches are compositionally biased toward low complexity: residues 242 to 258 (AEPA…AATP) and 265 to 280 (PVSE…STTT). The tract at residues 242–280 (AEPAPATTRPATPAATPSRPVRQPVSEETSEPATTSTTT) is disordered. LysM domains lie at 295-339 (QVHT…KIKG) and 345-389 (KAYS…KIAL). Residues 389-457 (LPDGFRDKGP…AAQPITPPPS (69 aa)) form a disordered region. The segment covering 400–429 (RTTTTTRPATPPANTYARVDSSAAAASTPS) has biased composition (low complexity). A lytM region spans residues 503-603 (NDGLNIRAPQ…VKDKAKPVDP (101 aa)).

It localises to the periplasm. In terms of biological role, required for efficient cell division, cell polarity and normal cell morphology. Facilitates remodeling of the peptidoglycan layer and, thus, coordinated constriction of the cell envelope during the division process. Plays a critical role in maintaining proper cell envelope architecture during growth and division. Required for normal envelope invagination during cell division and to establish or maintain outer membrane connections throughout the cell envelope. May serve as a regulatory hub coordinating the activities of multiple peptidoglycan-degrading enzymes during cell constriction. Required to position SdpA and SdpB at midcell. This is Cell division protein DipM from Caulobacter vibrioides (strain NA1000 / CB15N) (Caulobacter crescentus).